The chain runs to 45 residues: Osteocalcin (45 aa).

One can recognise a Gla domain in the interval 1 to 41 (AAGELTLTQLESLREVCEANLACEDMMDAQGIIAAYTAYYG). 4 residues coordinate Ca(2+): E11, E15, E18, and E24. 4-carboxyglutamate is present on residues E11, E15, and E18. A disulfide bridge connects residues C17 and C23.

The protein belongs to the osteocalcin/matrix Gla protein family. Gamma-carboxyglutamate residues are formed by vitamin K dependent carboxylation by GGCX. These residues are essential for the binding of calcium. As to expression, also found in smaller quantities in dentin.

It is found in the secreted. Its function is as follows. The carboxylated form is one of the main organic components of the bone matrix, which constitutes 1-2% of the total bone protein. The carboxylated form binds strongly to apatite and calcium. This chain is Osteocalcin (bglap), found in Lepomis macrochirus (Bluegill).